We begin with the raw amino-acid sequence, 301 residues long: Protein phosphatase 1 regulatory subunit 3B (301 aa).

The short motif at 79 to 82 (RVSF) is the PP1-binding motif element. The CBM21 domain occupies 142–250 (RNRLQAESVC…SNKGLNYRIV (109 aa)).

In terms of assembly, interacts with glycogen, PPP1CC catalytic subunit of PP1 and PYGL. Associates with glycogen particles. Forms complexes with debranching enzyme, glycogen phosphorylase, glycogen synthase and phosphorylase kinase which is necessary for its regulation of PP1 activity.

In terms of biological role, acts as a glycogen-targeting subunit for phosphatase PP1. Facilitates interaction of the PP1 with enzymes of the glycogen metabolism and regulates its activity. Suppresses the rate at which PP1 dephosphorylates (inactivates) glycogen phosphorylase and enhances the rate at which it activates glycogen synthase and therefore limits glycogen breakdown. This chain is Protein phosphatase 1 regulatory subunit 3B (ppp1r3b), found in Xenopus tropicalis (Western clawed frog).